The sequence spans 221 residues: Probable GTP-binding protein EngB (221 aa).

The EngB-type G domain maps to 37 to 219; the sequence is QGIEIALAGR…RAAIVKLLRE (183 aa). GTP is bound by residues 45 to 52, 72 to 76, 97 to 100, 164 to 167, and 198 to 200; these read GRSNVGKS, GRTQE, DMPG, TKTD, and TSS. 2 residues coordinate Mg(2+): Ser52 and Thr74.

This sequence belongs to the TRAFAC class TrmE-Era-EngA-EngB-Septin-like GTPase superfamily. EngB GTPase family. Mg(2+) serves as cofactor.

Functionally, necessary for normal cell division and for the maintenance of normal septation. The protein is Probable GTP-binding protein EngB of Afipia carboxidovorans (strain ATCC 49405 / DSM 1227 / KCTC 32145 / OM5) (Oligotropha carboxidovorans).